The sequence spans 110 residues: Putative caspase recruitment domain-containing protein 17P (110 aa).

A CARD domain is found at 1-91 (MADKVLKEKR…HLAGTLGLSA (91 aa)).

As to quaternary structure, interacts with pro-CASP1. As to expression, ubiquitous.

The protein localises to the cytoplasm. Functionally, regulator of procaspase-1/CASP1 activation implicated in the regulation of the proteolytic maturation of pro-IL-1beta/IL1B and its release during inflammation. Inhibits the release of IL1B in response to LPS in monocytes. However, unlike CASP1, do not induce NF-kappa-B activation. The sequence is that of Putative caspase recruitment domain-containing protein 17P (CARD17P) from Homo sapiens (Human).